Here is a 420-residue protein sequence, read N- to C-terminus: Gamma-glutamyl phosphate reductase 2 (420 aa).

Belongs to the gamma-glutamyl phosphate reductase family.

Its subcellular location is the cytoplasm. The enzyme catalyses L-glutamate 5-semialdehyde + phosphate + NADP(+) = L-glutamyl 5-phosphate + NADPH + H(+). It participates in amino-acid biosynthesis; L-proline biosynthesis; L-glutamate 5-semialdehyde from L-glutamate: step 2/2. Its function is as follows. Catalyzes the NADPH-dependent reduction of L-glutamate 5-phosphate into L-glutamate 5-semialdehyde and phosphate. The product spontaneously undergoes cyclization to form 1-pyrroline-5-carboxylate. In Synechocystis sp. (strain ATCC 27184 / PCC 6803 / Kazusa), this protein is Gamma-glutamyl phosphate reductase 2.